A 122-amino-acid chain; its full sequence is Small ribosomal subunit protein uS13 (122 aa).

The segment at 94 to 122 is disordered; it reads KGLPVRGQRTHTNARTRKGPRRAIAGKKK.

It belongs to the universal ribosomal protein uS13 family. Part of the 30S ribosomal subunit. Forms a loose heterodimer with protein S19. Forms two bridges to the 50S subunit in the 70S ribosome.

Its function is as follows. Located at the top of the head of the 30S subunit, it contacts several helices of the 16S rRNA. In the 70S ribosome it contacts the 23S rRNA (bridge B1a) and protein L5 of the 50S subunit (bridge B1b), connecting the 2 subunits; these bridges are implicated in subunit movement. Contacts the tRNAs in the A and P-sites. The protein is Small ribosomal subunit protein uS13 of Syntrophus aciditrophicus (strain SB).